Reading from the N-terminus, the 253-residue chain is uncharacterized protein (253 aa).

2 C2HC LYAR-type zinc fingers span residues 1 to 26 (MVFF…FQCR) and 27 to 51 (NTTF…VKCI). C6, C9, H21, C25, C32, C35, H47, and C50 together coordinate Zn(2+). The stretch at 136–171 (AAEADKMREEAIRKQEETQKMEKAQKEAAAAAKKET) forms a coiled coil.

It is found in the nucleus. This is an uncharacterized protein from Caenorhabditis elegans.